Consider the following 113-residue polypeptide: Cytochrome c oxidase subunit 7A2-like, mitochondrial (113 aa).

The transit peptide at 1-54 (MYYKFSSFTQKLAGAWASEAYTPQGLKPVSTEAPPIIFATPTKLTSSVTAYDYS) directs the protein to the mitochondrion. Lys-68 is modified (N6-acetyllysine). A helical transmembrane segment spans residues 81 to 106 (PDQMLYRTTMALTLGGTIYCLIALYM).

This sequence belongs to the cytochrome c oxidase VIIa family. In terms of assembly, interacts with the mitochondrial respiratory complexes III (CIII) and IV (CIV), promoting their association.

The protein resides in the mitochondrion inner membrane. It functions in the pathway energy metabolism; oxidative phosphorylation. In terms of biological role, assembly factor that mediates the formation of some mitochondrial respiratory supercomplexes (respirasomes), thereby promoting oxidative phosphorylation and energy metabolism. Acts as a molecular adapter that associates with both mitochondrial respiratory complexes III (CIII) and IV (CIV), promoting their association. Mediates the formation of various mitochondrial respiratory supercomplexes, such as MCIII(2)IV(2), composed of two CIII and two CIV, and the CS-respirasome (MCI(1)III(2)IV(2)), composed of one CI, two CIII and two CIV. Not involved in the formation of the canonical respirasome (MCI(1)III(2)IV(1)), composed of one CI, two CIII and one CIV. The formation of different respirasomes is important for cell adaptation to oxygen conditions and prevent metabolic exhaustion: supercomplexes mediated by COX7A2L/SCAF1 are required to maintain oxidative phosphorylation upon low oxygen conditions and promote metabolic rewiring toward glycolysis. The sequence is that of Cytochrome c oxidase subunit 7A2-like, mitochondrial from Mus musculus (Mouse).